Here is a 92-residue protein sequence, read N- to C-terminus: Small ribosomal subunit protein uS19 (92 aa).

Belongs to the universal ribosomal protein uS19 family.

Functionally, protein S19 forms a complex with S13 that binds strongly to the 16S ribosomal RNA. The protein is Small ribosomal subunit protein uS19 of Exiguobacterium sibiricum (strain DSM 17290 / CCUG 55495 / CIP 109462 / JCM 13490 / 255-15).